The primary structure comprises 220 residues: Inner membrane-spanning protein YciB (220 aa).

The next 6 helical transmembrane spans lie at 20–40 (EVPPLLKLALELGPLLVFFFA), 57–77 (IGAPIFLATALFMAATVIALA), 86–106 (LPIMPLVSGIVVLVFGALTLW), 123–143 (LFGGILLGGLFFGKSLLGYVF), 156–176 (KLTLRWALFFIFLAIVNEIVW), and 187–207 (FKVWGIMPITIVFTLLQMPLI).

It belongs to the YciB family.

It is found in the cell inner membrane. In terms of biological role, plays a role in cell envelope biogenesis, maintenance of cell envelope integrity and membrane homeostasis. The sequence is that of Inner membrane-spanning protein YciB from Brucella melitensis biotype 2 (strain ATCC 23457).